The following is a 130-amino-acid chain: Albumin-1 E (130 aa).

Residues 1–26 (MASVKLASLIVLFATLGMFLTKNVGA) form the signal peptide. 3 disulfides stabilise this stretch: Cys29–Cys46, Cys33–Cys48, and Cys41–Cys58. Propeptides lie at residues 64–69 (VFLKGN) and 123–130 (LLKSVSTA).

Post-translationally, the C-terminal glycine may be removed from PA1b.

In terms of biological role, PA1b binds to basic 7S globulin (BG) and stimulates its phosphorylation activity. Involved in the signal transduction system to regulate the growth and differentiation as a hormone peptide. Toxic to various insects through binding to a high affinity binding site in the insect gut. This chain is Albumin-1 E, found in Pisum sativum (Garden pea).